We begin with the raw amino-acid sequence, 908 residues long: Protein translocase subunit SecA (908 aa).

ATP contacts are provided by residues Gln-87, 105 to 109, and Asp-507; that span reads GEGKT. Residues 860–898 form a disordered region; the sequence is EALGNAEESDEASDQSVKTFERAGAKVGRNDPCPCGSGK. The Zn(2+) site is built by Cys-892, Cys-894, Cys-903, and His-904.

This sequence belongs to the SecA family. Monomer and homodimer. Part of the essential Sec protein translocation apparatus which comprises SecA, SecYEG and auxiliary proteins SecDF-YajC and YidC. It depends on Zn(2+) as a cofactor.

It is found in the cell inner membrane. It localises to the cytoplasm. The enzyme catalyses ATP + H2O + cellular proteinSide 1 = ADP + phosphate + cellular proteinSide 2.. Functionally, part of the Sec protein translocase complex. Interacts with the SecYEG preprotein conducting channel. Has a central role in coupling the hydrolysis of ATP to the transfer of proteins into and across the cell membrane, serving both as a receptor for the preprotein-SecB complex and as an ATP-driven molecular motor driving the stepwise translocation of polypeptide chains across the membrane. This chain is Protein translocase subunit SecA, found in Methylobacillus flagellatus (strain ATCC 51484 / DSM 6875 / VKM B-1610 / KT).